The following is a 522-amino-acid chain: Maturase K (522 aa).

The protein belongs to the intron maturase 2 family. MatK subfamily.

The protein localises to the plastid. Its subcellular location is the chloroplast. In terms of biological role, usually encoded in the trnK tRNA gene intron. Probably assists in splicing its own and other chloroplast group II introns. The polypeptide is Maturase K (Sapindus saponaria (Soapberry)).